We begin with the raw amino-acid sequence, 157 residues long: Ribonuclease H (157 aa).

The RNase H type-1 domain occupies 3–144; it reads ELKQLYIFTD…CDVLARKAAE (142 aa). Residues D12, E50, D72, and D136 each coordinate Mg(2+).

This sequence belongs to the RNase H family. As to quaternary structure, monomer. The cofactor is Mg(2+).

The protein localises to the cytoplasm. It carries out the reaction Endonucleolytic cleavage to 5'-phosphomonoester.. In terms of biological role, endonuclease that specifically degrades the RNA of RNA-DNA hybrids. This is Ribonuclease H from Shewanella frigidimarina (strain NCIMB 400).